We begin with the raw amino-acid sequence, 182 residues long: Protein GrpE (182 aa).

The tract at residues methionine 1–leucine 37 is disordered.

This sequence belongs to the GrpE family. As to quaternary structure, homodimer.

Its subcellular location is the cytoplasm. In terms of biological role, participates actively in the response to hyperosmotic and heat shock by preventing the aggregation of stress-denatured proteins, in association with DnaK and GrpE. It is the nucleotide exchange factor for DnaK and may function as a thermosensor. Unfolded proteins bind initially to DnaJ; upon interaction with the DnaJ-bound protein, DnaK hydrolyzes its bound ATP, resulting in the formation of a stable complex. GrpE releases ADP from DnaK; ATP binding to DnaK triggers the release of the substrate protein, thus completing the reaction cycle. Several rounds of ATP-dependent interactions between DnaJ, DnaK and GrpE are required for fully efficient folding. In Wolbachia sp. subsp. Brugia malayi (strain TRS), this protein is Protein GrpE.